The following is an 81-amino-acid chain: Protein Vpu (81 aa).

Residues 1 to 7 (MQPLVII) lie on the Extracellular side of the membrane. Residues 8–28 (AIAALVVAIIIAIVVWTIVYI) form a helical membrane-spanning segment. Topologically, residues 29–81 (EYRRIKRQRKIDCLIDRIRERAEDSGNESEGEREELSKLVEMGHHAPWDVDDL) are cytoplasmic. The disordered stretch occupies residues 50 to 81 (AEDSGNESEGEREELSKLVEMGHHAPWDVDDL). Phosphoserine; by host CK2 is present on residues Ser-53 and Ser-57. Over residues 62–81 (EELSKLVEMGHHAPWDVDDL) the composition is skewed to basic and acidic residues.

The protein belongs to the HIV-1 VPU protein family. Homopentamer. Interacts with host CD4 and BRTC; these interactions induce proteasomal degradation of CD4. Interacts with host BST2; this interaction leads to the degradation of host BST2. Interacts with host FBXW11. Interacts with host AP1M1; this interaction plays a role in the mistrafficking and subsequent degradation of host BST2. Interacts with host RANBP2; this interaction allows Vpu to down-regulate host BLM sumoylation. Phosphorylated by host CK2. This phosphorylation is necessary for interaction with human BTRC and degradation of CD4.

The protein localises to the host membrane. With respect to regulation, ion channel activity is inhibited by hexamethylene amiloride in vitro. Enhances virion budding by targeting host CD4 and Tetherin/BST2 to proteasome degradation. Degradation of CD4 prevents any unwanted premature interactions between viral Env and its host receptor CD4 in the endoplasmic reticulum. Degradation of antiretroviral protein Tetherin/BST2 is important for virion budding, as BST2 tethers new viral particles to the host cell membrane. Mechanistically, Vpu bridges either CD4 or BST2 to BTRC, a substrate recognition subunit of the Skp1/Cullin/F-box protein E3 ubiquitin ligase, induces their ubiquitination and subsequent proteasomal degradation. The alteration of the E3 ligase specificity by Vpu seems to promote the degradation of host IKBKB, leading to NF-kappa-B down-regulation and subsequent apoptosis. Acts as a viroporin that forms an oligomeric ion channel in membranes. Modulates the host DNA repair mechanisms to promote degradation of nuclear viral cDNA in cells that are already productively infected in order to suppress immune sensing and proviral hyper-integration (superinfection). Manipulates PML-NBs and modulates SUMOylation of host BLM protein thereby enhancing its DNA-end processing activity toward viral unintegrated linear DNA. Also inhibits RAD52-mediated homologous repair of viral cDNA, preventing the generation of dead-end circular forms of single copies of the long terminal repeat and permitting sustained nucleolytic attack. The polypeptide is Protein Vpu (Human immunodeficiency virus type 1 group M subtype D (isolate NDK) (HIV-1)).